The following is a 231-amino-acid chain: Protein FMP52, mitochondrial (231 aa).

A mitochondrion-targeting transit peptide spans 1–44 (MNGLVLGATGLCGGGFLRHAQEAPQFSKVYAILRRELPFPATDK).

The protein belongs to the FMP52 family.

Its subcellular location is the mitochondrion outer membrane. The chain is Protein FMP52, mitochondrial (FMP52) from Saccharomyces cerevisiae (strain ATCC 204508 / S288c) (Baker's yeast).